The following is a 1030-amino-acid chain: Toll-like receptor 9 (1030 aa).

Positions 1-24 are cleaved as a signal peptide; that stretch reads MGPRCTLHPLSLLVQVTALAAALA. Residues 25–816 lie on the Extracellular side of the membrane; the sequence is QGRLPAFLPC…LCLDETLSWN (792 aa). C34 and C44 are oxidised to a cystine. 46–50 is a binding site for DNA; the sequence is WLFLK. LRR repeat units follow at residues 61 to 84, 86 to 109, 121 to 146, 149 to 165, 166 to 189, 197 to 220, 222 to 241, 242 to 267, 282 to 305, 307 to 331, 332 to 355, 362 to 385, 389 to 412, 414 to 439, 469 to 493, 495 to 518, 519 to 542, 544 to 571, 573 to 597, 599 to 621, 626 to 649, 651 to 674, 675 to 698, 700 to 722, 723 to 746, and 748 to 771; these read RANVTSLSLLSNRIHHLHDSDFVH, SSLRTLNLKWNCPPAGLSPMHFPC, VPTLEELNLSYNSITTVPALPDSLVS, LSRTNILVLDPTHLTGL, HALRYLYMDGNCYYKNPCQGALEV, LGNLTHLSLKYNNLTEVPRSLPPS, ETLLLSYNHIVTLTPEDLAN, LTALRVLDVGGNCRRCDHARNPCREC, LSRLEGLVLKDSSLYNLDTRWFRG, DRLQVLDLSENFLYDCITKTTAFQG, LARLRSLNLSFNYHKKVSFAHLHL, LRSLKELDMHGIFFRSLSETTLQP, LPMLQTLRLQMNFINQAQLSIFGA, PGLLYVDLSDNRISGAARPVAITREV, CKAFSFTLDLSRNNLVTIQSEMFAR, SRLECLRLSHNSISQAVNGSQFVP, LTSLRVLDLSHNKLDLYHGRSFTE, PRLEALDLSYNSQPFTMQGVGHNLSFVA, LPALRYLSLAHNDIHSRVSQQLCSA, LCALDFSGNDLSRMWAEGDLYLR, LRSLVWLDLSQNHLHTLLPRALDN, PKSLKHLHLRDNNLAFFNWSSLTL, LPKLETLDLAGNQLKALSNGSLPS, TQLRRLDLSGNSIGFVNPGFFAL, AKQLEELNLSANALKTVEPSWFGS, and VGNLKVLDVSANPLHCACGATFVG. An N-linked (GlcNAc...) asparagine glycan is attached at N63. Residues 71 to 76 and 94 to 108 contribute to the DNA site; these read SNRIHH and KWNCPPAGLSPMHFP. A disulfide bond links C97 and C109. A glycan (N-linked (GlcNAc...) asparagine) is linked at N128. Residues Y131, R151, and 178–180 contribute to the DNA site; that span reads YYK. A disulfide bridge links C177 with C183. An N-linked (GlcNAc...) asparagine glycan is attached at N199. Y207 is a DNA binding site. Residues N209 and N241 are each glycosylated (N-linked (GlcNAc...) asparagine). Cystine bridges form between C254–C267 and C257–C264. C257 is lipidated: S-palmitoyl cysteine. DNA is bound at residue R261. A lipid anchor (S-palmitoyl cysteine) is attached at C264. The N-linked (GlcNAc...) asparagine glycan is linked to N339. A disulfide bridge links C469 with C499. N512 carries N-linked (GlcNAc...) asparagine glycosylation. N-linked (GlcNAc...) asparagine glycosylation is present at N566. N-linked (GlcNAc...) asparagine glycosylation is found at N668 and N693. The N-linked (GlcNAc...) asparagine glycan is linked to N730. Cystine bridges form between C763–C789 and C765–C808. A helical transmembrane segment spans residues 817–837; the sequence is CFGISLLAMALGLVVPMLHHL. At 838 to 1030 the chain is on the cytoplasmic side; it reads CGWDLWYCFH…NFCRGPTTAE (193 aa). Residues 865 to 1010 form the TIR domain; that stretch reads LFYDAFVVFD…SFWAQLGTAL (146 aa).

It belongs to the Toll-like receptor family. Monomer and homodimer. Exists as a monomer in the absence of unmethylated cytidine-phosphate-guanosine (CpG) ligand. Proteolytic processing of an insertion loop (Z-loop) is required for homodimerization upon binding to the unmethylated CpG ligand leading to its activation. Interacts with MYD88 via their respective TIR domains. Interacts with BTK. Interacts (via transmembrane domain) with UNC93B1. Interacts with CD300LH; the interaction may promote full activation of TLR9-triggered innate responses. Interacts with CNPY3 and HSP90B1; this interaction is required for proper folding in the endoplasmic reticulum. Interacts with SMPDL3B. Interacts with CD82; this interaction is essential for TLR9-dependent myddosome formation in response to CpG stimulation. Activated by proteolytic cleavage of the flexible loop between repeats LRR14 and LRR15 within the ectodomain. Cleavage requires UNC93B1. Proteolytically processed by first removing the majority of the ectodomain by either asparagine endopeptidase (AEP) or a cathepsin followed by a trimming event that is solely cathepsin mediated and required for optimal receptor signaling. Post-translationally, palmitoylated by ZDHHC3 in the Golgi regulates TLR9 trafficking from the Golgi to endosomes. Depalmitoylation by PPT1 controls the release of TLR9 from UNC93B1 in endosomes.

The protein localises to the endoplasmic reticulum membrane. Its subcellular location is the endosome. It is found in the lysosome. The protein resides in the cytoplasmic vesicle. It localises to the phagosome. Key component of innate and adaptive immunity. TLRs (Toll-like receptors) control host immune response against pathogens through recognition of molecular patterns specific to microorganisms. TLR9 is a nucleotide-sensing TLR which is activated by unmethylated cytidine-phosphate-guanosine (CpG) dinucleotides. Acts via MYD88 and TRAF6, leading to NF-kappa-B activation, cytokine secretion and the inflammatory response. Upon CpG stimulation, induces B-cell proliferation, activation, survival and antibody production. This Sus scrofa (Pig) protein is Toll-like receptor 9 (TLR9).